The following is a 49-amino-acid chain: Small ribosomal subunit protein eS31 (49 aa).

4 residues coordinate Zn(2+): C21, C24, C39, and C42. The segment at 21 to 42 adopts a C4-type zinc-finger fold; sequence CPRCGPGTFLADHKNRLTCGKC.

Belongs to the eukaryotic ribosomal protein eS31 family. Part of the 30S ribosomal subunit. The cofactor is Zn(2+).

The chain is Small ribosomal subunit protein eS31 from Methanosarcina barkeri (strain Fusaro / DSM 804).